We begin with the raw amino-acid sequence, 300 residues long: Ribosomal protein bS6--L-glutamate ligase (300 aa).

The 184-residue stretch at Met104–Glu287 folds into the ATP-grasp domain. ATP-binding positions include Lys141, Glu178–Tyr179, Asp187, and Arg211–Asn213. Positions 248, 260, and 262 each coordinate Mg(2+). Positions 248, 260, and 262 each coordinate Mn(2+).

This sequence belongs to the RimK family. It depends on Mg(2+) as a cofactor. Requires Mn(2+) as cofactor.

In terms of biological role, an L-glutamate ligase that catalyzes the ATP-dependent post-translational addition of glutamate residues to the C-terminus of ribosomal protein bS6 (RpsF). Is also able to catalyze the synthesis of poly-alpha-glutamate in vitro, via ATP hydrolysis from unprotected glutamate as substrate. The number of glutamate residues added to either RpsF or to poly-alpha-glutamate changes with pH. The polypeptide is Ribosomal protein bS6--L-glutamate ligase (Escherichia fergusonii (strain ATCC 35469 / DSM 13698 / CCUG 18766 / IAM 14443 / JCM 21226 / LMG 7866 / NBRC 102419 / NCTC 12128 / CDC 0568-73)).